A 402-amino-acid polypeptide reads, in one-letter code: uncharacterized protein (402 aa).

12 consecutive transmembrane segments (helical) span residues 26–46 (IFMS…AIAY), 67–87 (VALA…YVGF), 96–116 (FAAF…LTII), 126–146 (TVSI…NGTL), 168–188 (LFIL…IGFL), 213–233 (YVAY…MIDS), 235–255 (LFLL…GGYG), 289–309 (PIVI…GSII), 312–332 (ISVF…FDSL), 338–358 (FKNI…AVTI), 360–380 (FALL…SFLL), and 381–401 (LYKK…GYLI).

Belongs to the chromate ion transporter (CHR) (TC 2.A.51) family.

The protein localises to the cell membrane. This is an uncharacterized protein from Methanocaldococcus jannaschii (strain ATCC 43067 / DSM 2661 / JAL-1 / JCM 10045 / NBRC 100440) (Methanococcus jannaschii).